We begin with the raw amino-acid sequence, 481 residues long: RuvB-like helicase 2 (481 aa).

ATP is bound at residue 73–80 (GEPSTGKT). The disordered stretch occupies residues 453 to 481 (EEVERDPAAGGGAKRRVEGGGGDAQPMEH).

The protein belongs to the RuvB family. In terms of assembly, forms homohexameric rings. May form a dodecamer with rept made of two stacked hexameric rings. Component of the chromatin remodeling Ino80 complex. Interacts with Myc and pont. In terms of tissue distribution, higher expression occurs in primordia of mesoderm, anterior and posterior midgut and cephalic furrow early in gastrulation, as well as in endoderm and mesoderm lineages during germ band extension. Later in development expression is only maintained in endoderm cells. Expressed in thoracic and abdominal segment neural precursors of all embryonic chordotonal organs.

The protein resides in the nucleus. It catalyses the reaction ATP + H2O = ADP + phosphate + H(+). Its function is as follows. Acts as a transcriptional coactivator in Wg signaling caused by altered arm signaling. Pont and rept interfere antagonistically with nuclear arm signaling function, and are required to enhance or reduce arm activity, respectively. Also an essential cofactor for the normal function of Myc; required for cellular proliferation and growth. Functionally, proposed core component of the chromatin remodeling Ino80 complex which is involved in transcriptional regulation, DNA replication and probably DNA repair. The sequence is that of RuvB-like helicase 2 from Drosophila melanogaster (Fruit fly).